The chain runs to 101 residues: Synaptobrevin-B (101 aa).

Over 1–76 (MSNNPNNSGQ…RRQMWCRNMK (76 aa)) the chain is Cytoplasmic. Residues 13-73 (KTQSILQEVD…VTIRRQMWCR (61 aa)) form the v-SNARE coiled-coil homology domain. The chain crosses the membrane as a helical; Anchor for type IV membrane protein span at residues 77 to 97 (LQLIIIAVVILVLAVILIPII). Over 98-101 (MKFV) the chain is Vesicular.

Belongs to the synaptobrevin family.

The protein localises to the cytoplasmic vesicle. It localises to the secretory vesicle membrane. In terms of biological role, involved in the targeting and/or fusion of transport vesicles to their target membrane. This chain is Synaptobrevin-B (sybB), found in Dictyostelium discoideum (Social amoeba).